We begin with the raw amino-acid sequence, 97 residues long: Co-chaperonin GroES (97 aa).

The protein belongs to the GroES chaperonin family. Heptamer of 7 subunits arranged in a ring. Interacts with the chaperonin GroEL.

It is found in the cytoplasm. Its function is as follows. Together with the chaperonin GroEL, plays an essential role in assisting protein folding. The GroEL-GroES system forms a nano-cage that allows encapsulation of the non-native substrate proteins and provides a physical environment optimized to promote and accelerate protein folding. GroES binds to the apical surface of the GroEL ring, thereby capping the opening of the GroEL channel. The chain is Co-chaperonin GroES from Buchnera aphidicola subsp. Pterocomma populeum.